The following is a 503-amino-acid chain: ATP synthase subunit alpha (503 aa).

170-177 (GDKQTGKT) contributes to the ATP binding site.

Belongs to the ATPase alpha/beta chains family. As to quaternary structure, F-type ATPases have 2 components, CF(1) - the catalytic core - and CF(0) - the membrane proton channel. CF(1) has five subunits: alpha(3), beta(3), gamma(1), delta(1), epsilon(1). CF(0) has three main subunits: a(1), b(2) and c(9-12). The alpha and beta chains form an alternating ring which encloses part of the gamma chain. CF(1) is attached to CF(0) by a central stalk formed by the gamma and epsilon chains, while a peripheral stalk is formed by the delta and b chains.

The protein localises to the cell inner membrane. It catalyses the reaction ATP + H2O + 4 H(+)(in) = ADP + phosphate + 5 H(+)(out). Its function is as follows. Produces ATP from ADP in the presence of a proton gradient across the membrane. The alpha chain is a regulatory subunit. This chain is ATP synthase subunit alpha, found in Helicobacter acinonychis (strain Sheeba).